We begin with the raw amino-acid sequence, 302 residues long: Ornithine carbamoyltransferase (302 aa).

Carbamoyl phosphate is bound by residues 53–56, Gln80, Arg104, and 131–134; these read STRT and HPCQ. L-ornithine is bound by residues Asn162, Asp219, and 223 to 224; that span reads SM. Carbamoyl phosphate contacts are provided by residues 259–260 and Arg287; that span reads CL.

This sequence belongs to the aspartate/ornithine carbamoyltransferase superfamily. OTCase family.

The protein localises to the cytoplasm. The catalysed reaction is carbamoyl phosphate + L-ornithine = L-citrulline + phosphate + H(+). Its pathway is amino-acid biosynthesis; L-arginine biosynthesis; L-arginine from L-ornithine and carbamoyl phosphate: step 1/3. Functionally, reversibly catalyzes the transfer of the carbamoyl group from carbamoyl phosphate (CP) to the N(epsilon) atom of ornithine (ORN) to produce L-citrulline. The polypeptide is Ornithine carbamoyltransferase (Hydrogenovibrio crunogenus (strain DSM 25203 / XCL-2) (Thiomicrospira crunogena)).